The following is a 225-amino-acid chain: Endonuclease V (225 aa).

Residues D43 and D110 each coordinate Mg(2+).

Belongs to the endonuclease V family. It depends on Mg(2+) as a cofactor.

The protein resides in the cytoplasm. The enzyme catalyses Endonucleolytic cleavage at apurinic or apyrimidinic sites to products with a 5'-phosphate.. Functionally, DNA repair enzyme involved in the repair of deaminated bases. Selectively cleaves double-stranded DNA at the second phosphodiester bond 3' to a deoxyinosine leaving behind the intact lesion on the nicked DNA. The sequence is that of Endonuclease V from Thermotoga petrophila (strain ATCC BAA-488 / DSM 13995 / JCM 10881 / RKU-1).